Here is a 391-residue protein sequence, read N- to C-terminus: Carbamoyl phosphate synthase small chain (391 aa).

The CPSase stretch occupies residues 1–199 (MVRISGFCCA…TWEFIEGPTT (199 aa)). The L-glutamine site is built by Ser-61, Gly-251, and Gly-253. The Glutamine amidotransferase type-1 domain occupies 203–388 (TVVAIDFGVK…VALMRDRQPT (186 aa)). Cys-279 acts as the Nucleophile in catalysis. The L-glutamine site is built by Leu-280, Gln-283, Asn-319, Gly-321, and Phe-322. Catalysis depends on residues His-361 and Glu-363.

The protein belongs to the CarA family. As to quaternary structure, composed of two chains; the small (or glutamine) chain promotes the hydrolysis of glutamine to ammonia, which is used by the large (or ammonia) chain to synthesize carbamoyl phosphate. Tetramer of heterodimers (alpha,beta)4.

The enzyme catalyses hydrogencarbonate + L-glutamine + 2 ATP + H2O = carbamoyl phosphate + L-glutamate + 2 ADP + phosphate + 2 H(+). The catalysed reaction is L-glutamine + H2O = L-glutamate + NH4(+). It functions in the pathway amino-acid biosynthesis; L-arginine biosynthesis; carbamoyl phosphate from bicarbonate: step 1/1. It participates in pyrimidine metabolism; UMP biosynthesis via de novo pathway; (S)-dihydroorotate from bicarbonate: step 1/3. Its function is as follows. Small subunit of the glutamine-dependent carbamoyl phosphate synthetase (CPSase). CPSase catalyzes the formation of carbamoyl phosphate from the ammonia moiety of glutamine, carbonate, and phosphate donated by ATP, constituting the first step of 2 biosynthetic pathways, one leading to arginine and/or urea and the other to pyrimidine nucleotides. The small subunit (glutamine amidotransferase) binds and cleaves glutamine to supply the large subunit with the substrate ammonia. The polypeptide is Carbamoyl phosphate synthase small chain (Synechococcus sp. (strain ATCC 27144 / PCC 6301 / SAUG 1402/1) (Anacystis nidulans)).